A 1014-amino-acid polypeptide reads, in one-letter code: EMILIN-1-A (1014 aa).

A signal peptide spans 1–27 (MALYFVYLSTLLALILLGDNWAAGTYA). Residues 53–128 (HRNWCAYVVT…HGYSGDDCSD (76 aa)) form the EMI domain. 3 disulfides stabilise this stretch: C57–C118, C84–C89, and C117–C126. Disordered regions lie at residues 125–150 (DCSDGSSAIHDSRARPTGEEGRSDSD) and 811–869 (QDFT…ANVP). The span at 134-150 (HDSRARPTGEEGRSDSD) shows a compositional bias: basic and acidic residues. Residues 145–179 (GRSDSDRIRQLEEQIQSLNKNLHNLQKKIYEESQR) are a coiled coil. The region spanning 815–865 (GPPGLPGPQGEKGSKGPPGPRGPLGKEGPQGRVGPVGPPGLRGEQGPPGKD) is the Collagen-like domain. A compositionally biased stretch (low complexity) spans 840 to 856 (KEGPQGRVGPVGPPGLR). One can recognise a C1q domain in the interval 866–1012 (ANVPRLSFSA…GMLLYEESED (147 aa)).

It localises to the secreted. Its subcellular location is the extracellular space. The protein localises to the extracellular matrix. Its function is as follows. May be responsible for anchoring smooth muscle cells to elastic fibers, and may be involved not only in the formation of the elastic fiber, but also in the processes that regulate vessel assembly. Has cell adhesive capacity. This chain is EMILIN-1-A, found in Danio rerio (Zebrafish).